The sequence spans 712 residues: Patatin-like phospholipase domain-containing protein NFIA_019760 (712 aa).

Residues 1–13 are compositionally biased toward basic and acidic residues; that stretch reads MTSDEKSATRDIY. A disordered region spans residues 1 to 21; it reads MTSDEKSATRDIYDPNTLPDY. Residues 85–105 form a helical membrane-spanning segment; sequence WPFLFTVFAWITVLGFAYTLT. The 192-residue stretch at 275 to 466 folds into the PNPLA domain; the sequence is LCLSGGATFA…RTDIPIKALN (192 aa). The GXSXG signature appears at 306–310; it reads GTSGG. Serine 308 (nucleophile) is an active-site residue. Catalysis depends on aspartate 453, which acts as the Proton acceptor. Residues 628-687 form a disordered region; the sequence is RRRQDRAEEHADRMVERLDQSFPERQSDYKDESHYTEVSDSLSATSSRPHTPDARRSSMF. Basic and acidic residues-rich tracts occupy residues 632-646 and 652-664; these read DRAE…ERLD and RQSD…HYTE. A compositionally biased stretch (polar residues) spans 665 to 676; sequence VSDSLSATSSRP. A compositionally biased stretch (basic and acidic residues) spans 677 to 687; that stretch reads HTPDARRSSMF.

It belongs to the PLPL family.

It is found in the membrane. Probable lipid hydrolase. The polypeptide is Patatin-like phospholipase domain-containing protein NFIA_019760 (Neosartorya fischeri (strain ATCC 1020 / DSM 3700 / CBS 544.65 / FGSC A1164 / JCM 1740 / NRRL 181 / WB 181) (Aspergillus fischerianus)).